A 140-amino-acid polypeptide reads, in one-letter code: Organic hydroperoxide resistance protein-like (140 aa).

It belongs to the OsmC/Ohr family.

This is Organic hydroperoxide resistance protein-like from Mycoplasma genitalium (strain ATCC 33530 / DSM 19775 / NCTC 10195 / G37) (Mycoplasmoides genitalium).